Reading from the N-terminus, the 299-residue chain is tRNA dimethylallyltransferase (299 aa).

Residue 13–20 (GPTASGKT) participates in ATP binding. 15-20 (TASGKT) serves as a coordination point for substrate. The segment at 38–41 (DSRQ) is interaction with substrate tRNA.

This sequence belongs to the IPP transferase family. Monomer. Mg(2+) is required as a cofactor.

It carries out the reaction adenosine(37) in tRNA + dimethylallyl diphosphate = N(6)-dimethylallyladenosine(37) in tRNA + diphosphate. In terms of biological role, catalyzes the transfer of a dimethylallyl group onto the adenine at position 37 in tRNAs that read codons beginning with uridine, leading to the formation of N6-(dimethylallyl)adenosine (i(6)A). This chain is tRNA dimethylallyltransferase, found in Prochlorococcus marinus (strain MIT 9211).